A 333-amino-acid chain; its full sequence is Probable 4-hydroxyproline 2-epimerase (333 aa).

Cysteine 90 (proton acceptor) is an active-site residue. Substrate-binding positions include 91-92 (GH), histidine 223, and aspartate 249. Cysteine 253 (proton donor) is an active-site residue. 254-255 (GT) is a binding site for substrate.

Belongs to the proline racemase family.

The enzyme catalyses trans-4-hydroxy-L-proline = cis-4-hydroxy-D-proline. Functionally, likely catalyzes the epimerization of trans-4-hydroxy-L-proline (t4LHyp) to cis-4-hydroxy-D-proline (c4DHyp). May be involved in the degradation pathway that converts t4LHyp to alpha-ketoglutarate, which would allow R.meliloti to grow on t4LHyp as a sole carbon source. The polypeptide is Probable 4-hydroxyproline 2-epimerase (Rhizobium meliloti (strain 1021) (Ensifer meliloti)).